The chain runs to 299 residues: Oxygen-dependent coproporphyrinogen-III oxidase (299 aa).

Residue S92 participates in substrate binding. A divalent metal cation contacts are provided by H96 and H106. H106 (proton donor) is an active-site residue. Residue 108–110 (NVR) participates in substrate binding. Residues H145 and H175 each coordinate a divalent metal cation. Residues 239–274 (YVEFNLVYDRGTLFGLQSGGRAESILMSLPPRVRWE) are important for dimerization. Residue 257 to 259 (GGR) participates in substrate binding.

This sequence belongs to the aerobic coproporphyrinogen-III oxidase family. In terms of assembly, homodimer. A divalent metal cation serves as cofactor.

The protein localises to the cytoplasm. It catalyses the reaction coproporphyrinogen III + O2 + 2 H(+) = protoporphyrinogen IX + 2 CO2 + 2 H2O. It participates in porphyrin-containing compound metabolism; protoporphyrin-IX biosynthesis; protoporphyrinogen-IX from coproporphyrinogen-III (O2 route): step 1/1. Functionally, involved in the heme biosynthesis. Catalyzes the aerobic oxidative decarboxylation of propionate groups of rings A and B of coproporphyrinogen-III to yield the vinyl groups in protoporphyrinogen-IX. The protein is Oxygen-dependent coproporphyrinogen-III oxidase of Xanthomonas oryzae pv. oryzae (strain MAFF 311018).